The primary structure comprises 185 residues: Peptidyl-tRNA hydrolase (185 aa).

Position 14 (Tyr14) interacts with tRNA. Catalysis depends on His19, which acts as the Proton acceptor. TRNA is bound by residues Phe63, Asn65, and Asn111.

Belongs to the PTH family. In terms of assembly, monomer.

Its subcellular location is the cytoplasm. The enzyme catalyses an N-acyl-L-alpha-aminoacyl-tRNA + H2O = an N-acyl-L-amino acid + a tRNA + H(+). In terms of biological role, hydrolyzes ribosome-free peptidyl-tRNAs (with 1 or more amino acids incorporated), which drop off the ribosome during protein synthesis, or as a result of ribosome stalling. Its function is as follows. Catalyzes the release of premature peptidyl moieties from peptidyl-tRNA molecules trapped in stalled 50S ribosomal subunits, and thus maintains levels of free tRNAs and 50S ribosomes. The sequence is that of Peptidyl-tRNA hydrolase from Desulfitobacterium hafniense (strain Y51).